Reading from the N-terminus, the 252-residue chain is Chitooligosaccharide deacetylase (252 aa).

2 residues coordinate Mg(2+): histidine 61 and histidine 125.

This sequence belongs to the YdjC deacetylase family. ChbG subfamily. In terms of assembly, homodimer. It depends on Mg(2+) as a cofactor.

It localises to the cytoplasm. It catalyses the reaction N,N'-diacetylchitobiose + H2O = N-acetyl-beta-D-glucosaminyl-(1-&gt;4)-D-glucosamine + acetate. The enzyme catalyses diacetylchitobiose-6'-phosphate + H2O = N'-monoacetylchitobiose-6'-phosphate + acetate. It functions in the pathway glycan degradation; chitin degradation. Involved in the degradation of chitin. ChbG is essential for growth on the acetylated chitooligosaccharides chitobiose and chitotriose but is dispensable for growth on cellobiose and chitosan dimer, the deacetylated form of chitobiose. Deacetylation of chitobiose-6-P and chitotriose-6-P is necessary for both the activation of the chb promoter by the regulatory protein ChbR and the hydrolysis of phosphorylated beta-glucosides by the phospho-beta-glucosidase ChbF. Catalyzes the removal of only one acetyl group from chitobiose-6-P to yield monoacetylchitobiose-6-P, the inducer of ChbR and the substrate of ChbF. The sequence is that of Chitooligosaccharide deacetylase from Escherichia coli O139:H28 (strain E24377A / ETEC).